We begin with the raw amino-acid sequence, 147 residues long: uncharacterized protein (147 aa).

An HTH LytTR-type domain is found at 44–147 (LVGYIDKEIH…LKSIKERLSI (104 aa)).

The protein localises to the cytoplasm. This is an uncharacterized protein from Staphylococcus aureus (strain bovine RF122 / ET3-1).